Consider the following 218-residue polypeptide: Uracil-DNA glycosylase (218 aa).

The active-site Proton acceptor is the Asp59.

This sequence belongs to the uracil-DNA glycosylase (UDG) superfamily. UNG family.

The protein resides in the cytoplasm. The catalysed reaction is Hydrolyzes single-stranded DNA or mismatched double-stranded DNA and polynucleotides, releasing free uracil.. Functionally, excises uracil residues from the DNA which can arise as a result of misincorporation of dUMP residues by DNA polymerase or due to deamination of cytosine. This chain is Uracil-DNA glycosylase, found in Staphylococcus saprophyticus subsp. saprophyticus (strain ATCC 15305 / DSM 20229 / NCIMB 8711 / NCTC 7292 / S-41).